The chain runs to 261 residues: Tyrosine phosphatase-like protein H5 (261 aa).

One can recognise a Tyrosine-protein phosphatase domain in the interval 26–261; it reads LIKKEHDKVL…ESVEQEYFVP (236 aa).

It belongs to the protein-tyrosine phosphatase family.

The sequence is that of Tyrosine phosphatase-like protein H5 (H6) from Microplitis demolitor bracovirus (isolate Webb) (MdBV).